We begin with the raw amino-acid sequence, 352 residues long: MDYQVSSPTYDIDYYTSEPCQKINVKQIAARLLPPLYSLVFIFGFVGNILVVLILINCKRLKSMTDIYLLNLAISDLLFLLTVPFWAHYAAAQWNFGNTMCQLLTGLYFIGFFSGIFFIILLTIDRYLAIVHAVFALKARTVTFGVVTSVITWVVAVFASLPGIIFTRYQREGLHYTCSSHFPYSQYQFWKNFQTLKIVILGLVLPLLVMVICYSGILKTLLRCRNEKKRHRAVRLIFTIMIVYFLFWAPYNIVLLLNTFQEFFGLNNCSSSNRLDQAMQVTETLGMTHCCINPIIYAFVGEKFRNYLLVFFQKHIAKRFCKCCSIFQQEAPERASSVYTRSTGEQETSVGL.

Over 1 to 30 (MDYQVSSPTYDIDYYTSEPCQKINVKQIAA) the chain is Extracellular. Tyr3 carries the sulfotyrosine modification. O-linked (GalNAc...) serine glycosylation is found at Ser6 and Ser7. Tyr10, Tyr14, and Tyr15 each carry sulfotyrosine. Disulfide bonds link Cys20/Cys269 and Cys101/Cys178. The chain crosses the membrane as a helical span at residues 31–58 (RLLPPLYSLVFIFGFVGNILVVLILINC). The Cytoplasmic portion of the chain corresponds to 59 to 68 (KRLKSMTDIY). The helical transmembrane segment at 69 to 89 (LLNLAISDLLFLLTVPFWAHY) threads the bilayer. Residues 90 to 102 (AAAQWNFGNTMCQ) lie on the Extracellular side of the membrane. A helical membrane pass occupies residues 103–124 (LLTGLYFIGFFSGIFFIILLTI). The Cytoplasmic segment spans residues 125–141 (DRYLAIVHAVFALKART). Residues 142–166 (VTFGVVTSVITWVVAVFASLPGIIF) form a helical membrane-spanning segment. Residues 167-198 (TRYQREGLHYTCSSHFPYSQYQFWKNFQTLKI) lie on the Extracellular side of the membrane. A helical transmembrane segment spans residues 199 to 218 (VILGLVLPLLVMVICYSGIL). Topologically, residues 219–235 (KTLLRCRNEKKRHRAVR) are cytoplasmic. The helical transmembrane segment at 236–260 (LIFTIMIVYFLFWAPYNIVLLLNTF) threads the bilayer. Residues 261-277 (QEFFGLNNCSSSNRLDQ) are Extracellular-facing. A helical transmembrane segment spans residues 278-301 (AMQVTETLGMTHCCINPIIYAFVG). The Cytoplasmic portion of the chain corresponds to 302–352 (EKFRNYLLVFFQKHIAKRFCKCCSIFQQEAPERASSVYTRSTGEQETSVGL). Residues Cys321, Cys323, and Cys324 are each lipidated (S-palmitoyl cysteine). Ser336, Ser337, Ser342, and Ser349 each carry phosphoserine; by BARK1.

The protein belongs to the G-protein coupled receptor 1 family. As to quaternary structure, interacts with PRAF2. Efficient ligand binding to CCL3/MIP-1alpha and CCL4/MIP-1beta requires sulfation, O-glycosylation and sialic acid modifications. Glycosylation on Ser-6 is required for efficient binding of CCL4. Interacts with GRK2. Interacts with ARRB1 and ARRB2. Interacts with CNIH4. Interacts with S100A4; this interaction stimulates T-lymphocyte chemotaxis. In terms of processing, sulfated on at least 2 of the N-terminal tyrosines. Sulfation is required for efficient binding of the chemokines, CCL3 and CCL4. Post-translationally, palmitoylation in the C-terminal is important for cell surface expression. Phosphorylation on serine residues in the C-terminal is stimulated by binding CC chemokines especially by APO-RANTES. In terms of processing, O-glycosylated, but not N-glycosylated. Ser-6 appears to be the major site even if Ser-7 may be also O-glycosylated. Also sialylated glycans present which contribute to chemokine binding. Thr-16 and Ser-17 may also be glycosylated and, if so, with small moieties such as a T-antigen.

The protein localises to the cell membrane. Receptor for a number of inflammatory CC-chemokines including CCL3/MIP-1-alpha, CCL4/MIP-1-beta and RANTES and subsequently transduces a signal by increasing the intracellular calcium ion level. May play a role in the control of granulocytic lineage proliferation or differentiation. Participates in T-lymphocyte migration to the infection site by acting as a chemotactic receptor. This chain is C-C chemokine receptor type 5 (CCR5), found in Erythrocebus patas (Red guenon).